Reading from the N-terminus, the 88-residue chain is MSESIERNRRHVYQGRVVSDKMDKTIVVVVDTYKNHPVYSKRTRYSKKYYAMDENNEAKVGDIVRIMETRPLSRTKRFRLVDIVKKSV.

It belongs to the universal ribosomal protein uS17 family. In terms of assembly, part of the 30S ribosomal subunit.

Functionally, one of the primary rRNA binding proteins, it binds specifically to the 5'-end of 16S ribosomal RNA. The sequence is that of Small ribosomal subunit protein uS17 from Lactobacillus delbrueckii subsp. bulgaricus (strain ATCC 11842 / DSM 20081 / BCRC 10696 / JCM 1002 / NBRC 13953 / NCIMB 11778 / NCTC 12712 / WDCM 00102 / Lb 14).